Reading from the N-terminus, the 516-residue chain is Citrate synthase, glyoxysomal (516 aa).

Residues methionine 1–valine 43 constitute a glyoxysome transit peptide. Catalysis depends on residues histidine 329, histidine 368, and aspartate 424.

Belongs to the citrate synthase family.

It localises to the glyoxysome. The catalysed reaction is oxaloacetate + acetyl-CoA + H2O = citrate + CoA + H(+). Its pathway is carbohydrate metabolism; glyoxylate cycle; isocitrate from oxaloacetate: step 1/2. In Cucurbita maxima (Pumpkin), this protein is Citrate synthase, glyoxysomal.